The sequence spans 385 residues: GTPase Obg (385 aa).

Positions 1–159 (MHFIDQAEIE…RRLRLELKLI (159 aa)) constitute an Obg domain. Residues 160–328 (AEVGIVGMPN…LLQRVWQCLG (169 aa)) form the OBG-type G domain. GTP contacts are provided by residues 166–173 (GMPNAGKS), 191–195 (FTTLQ), 213–216 (DIPG), 280–283 (NKID), and 309–311 (SAV). Positions 173 and 193 each coordinate Mg(2+).

Belongs to the TRAFAC class OBG-HflX-like GTPase superfamily. OBG GTPase family. Monomer. Requires Mg(2+) as cofactor.

The protein localises to the cytoplasm. In terms of biological role, an essential GTPase which binds GTP, GDP and possibly (p)ppGpp with moderate affinity, with high nucleotide exchange rates and a fairly low GTP hydrolysis rate. Plays a role in control of the cell cycle, stress response, ribosome biogenesis and in those bacteria that undergo differentiation, in morphogenesis control. The protein is GTPase Obg of Synechococcus sp. (strain JA-3-3Ab) (Cyanobacteria bacterium Yellowstone A-Prime).